Consider the following 345-residue polypeptide: S-adenosylmethionine:tRNA ribosyltransferase-isomerase (345 aa).

This sequence belongs to the QueA family. As to quaternary structure, monomer.

It is found in the cytoplasm. The enzyme catalyses 7-aminomethyl-7-carbaguanosine(34) in tRNA + S-adenosyl-L-methionine = epoxyqueuosine(34) in tRNA + adenine + L-methionine + 2 H(+). It functions in the pathway tRNA modification; tRNA-queuosine biosynthesis. Its function is as follows. Transfers and isomerizes the ribose moiety from AdoMet to the 7-aminomethyl group of 7-deazaguanine (preQ1-tRNA) to give epoxyqueuosine (oQ-tRNA). This Anaeromyxobacter sp. (strain Fw109-5) protein is S-adenosylmethionine:tRNA ribosyltransferase-isomerase.